The sequence spans 230 residues: Ribonuclease 3 (230 aa).

One can recognise an RNase III domain in the interval 5 to 125 (YSRFYNILGY…VIGAIYLDSD (121 aa)). Glutamate 40 is a Mg(2+) binding site. The active site involves aspartate 44. The Mg(2+) site is built by aspartate 111 and glutamate 114. Glutamate 114 is a catalytic residue. The DRBM domain maps to 153–223 (DSKSKLQEIL…AEKMIEMLSQ (71 aa)).

It belongs to the ribonuclease III family. As to quaternary structure, homodimer. Mg(2+) serves as cofactor.

It is found in the cytoplasm. It carries out the reaction Endonucleolytic cleavage to 5'-phosphomonoester.. Functionally, digests double-stranded RNA. Involved in the processing of primary rRNA transcript to yield the immediate precursors to the large and small rRNAs (23S and 16S). Processes some mRNAs, and tRNAs when they are encoded in the rRNA operon. Processes pre-crRNA and tracrRNA of type II CRISPR loci if present in the organism. This chain is Ribonuclease 3, found in Francisella tularensis subsp. tularensis (strain FSC 198).